We begin with the raw amino-acid sequence, 164 residues long: NADH-quinone oxidoreductase subunit I (164 aa).

2 4Fe-4S ferredoxin-type domains span residues 55 to 85 (LRRYPNGEERCIACKLCEAVCPAQAITIDAE) and 95 to 124 (TRYDIDMTKCIYCGFCEEACPVDAIVEGPN). [4Fe-4S] cluster is bound by residues Cys-65, Cys-68, Cys-71, Cys-75, Cys-104, Cys-107, Cys-110, and Cys-114.

Belongs to the complex I 23 kDa subunit family. NDH-1 is composed of 14 different subunits. Subunits NuoA, H, J, K, L, M, N constitute the membrane sector of the complex. [4Fe-4S] cluster serves as cofactor.

It is found in the cell inner membrane. It carries out the reaction a quinone + NADH + 5 H(+)(in) = a quinol + NAD(+) + 4 H(+)(out). In terms of biological role, NDH-1 shuttles electrons from NADH, via FMN and iron-sulfur (Fe-S) centers, to quinones in the respiratory chain. The immediate electron acceptor for the enzyme in this species is believed to be ubiquinone. Couples the redox reaction to proton translocation (for every two electrons transferred, four hydrogen ions are translocated across the cytoplasmic membrane), and thus conserves the redox energy in a proton gradient. This Roseobacter denitrificans (strain ATCC 33942 / OCh 114) (Erythrobacter sp. (strain OCh 114)) protein is NADH-quinone oxidoreductase subunit I.